A 465-amino-acid chain; its full sequence is Kinesin-like protein KIN-1 (465 aa).

Residues 3 to 334 (NVTVCARFRP…LRFGMRAKHI (332 aa)) enclose the Kinesin motor domain. 87-94 (GQTGAGKT) contributes to the ATP binding site. The interval 338–358 (PRASEVKSAKAQEEPSSVTKD) is disordered. Basic and acidic residues predominate over residues 341-358 (SEVKSAKAQEEPSSVTKD). The stretch at 402–444 (VYEDIVSKTIQSLQQAVDELQQKVKKLEAENIGIQEQALRNHE) forms a coiled coil.

The protein belongs to the TRAFAC class myosin-kinesin ATPase superfamily. Kinesin family. KIN-1 subfamily. In terms of assembly, homodimer. Interacts with WIP1 and WIP2. Specifically expressed in ovules and anthers.

Its function is as follows. Kinesin-like motor protein that promotes synapsis and is required for proper crossover distribution in meiosis. Plays a role in the nuclear division cycles during megagametogenesis. The sequence is that of Kinesin-like protein KIN-1 from Arabidopsis thaliana (Mouse-ear cress).